A 121-amino-acid chain; its full sequence is Piercer of microtubule wall 2 protein (121 aa).

A compositionally biased stretch (basic and acidic residues) spans M1–S10. Positions M1–V29 are disordered.

Belongs to the PIERCE2 family. In terms of assembly, microtubule inner protein component of sperm flagellar doublet microtubules. Interacts with CFAP53, ODAD1 and ODAD3; the interactions link the outer dynein arms docking complex (ODA-DC) to the internal microtubule inner proteins (MIP) in cilium axoneme. As to expression, expressed in airway epithelial cells.

The protein localises to the cytoplasm. It localises to the cytoskeleton. Its subcellular location is the cilium axoneme. The protein resides in the flagellum axoneme. Its function is as follows. Microtubule inner protein involved in the attachment of outer dynein arms (ODAs) to dynein-decorated doublet microtubules (DMTs) in cilia axoneme, which is required for motile cilia beating. This chain is Piercer of microtubule wall 2 protein, found in Homo sapiens (Human).